The following is a 547-amino-acid chain: GVPGPNGDVGPAGPTGPAGLDGAPGAQGPDGEPGLPGLPGQSGKSGASGQPGVPGPVGAAGKPGSIRGQPGPPGPPGDLGRPGERGAKGVRGTPGAPGVDGVAGIAGAIGFPGPMGPDGAAGPSGYPGFDGVAGKPGPQGAMGPKGQAGERGPQGTPGTQGSKGVVGPKGVVGPQGDSGDTGDAGQKGARGTAGSVGAKGTVGLPGNQGPQGPAGLKGVKGEKGEVGDKGILGPDGDKGPTGMSGDAGPAGPIGDAGIQGPPGQDGPTGAQGPRGGQGPKGPAGAVGDVGDRGSTGPAGPPGPPGPTGGGIILVPVNDQNPTRSPVSGSVFYRGQAEETDVNLGSVADVIELHKKLQHLKSPTGTKDSPARSCHDLFLEDNSTSDGYYWIDPNGGCIGDAVKVFCNFTGGVQQTCISATKNAGDLKSWSGHSIWFSDMLGGFKLTYDISRSQLQFIRAASRHAVQSFTYKCRNSAAAVIFRTQDNKEIAANKVTYDGCKSRPSVPDAAFVAVETKRVEQLPIRDFASSDIAGQHQEFGFEMGPACFY.

Disordered stretches follow at residues 1–99 (GVPG…APGV) and 116–311 (GPDG…GGGI). Residues 1–280 (GVPGPNGDVG…QGPRGGQGPK (280 aa)) are triple-helical region. Composition is skewed to low complexity over residues 27–69 (QGPD…IRGQ) and 160–175 (QGSK…VGPQ). Allysine is present on Lys187. A compositionally biased stretch (basic and acidic residues) spans 219-228 (VKGEKGEVGD). Over residues 246–271 (DAGPAGPIGDAGIQGPPGQDGPTGAQ) the composition is skewed to low complexity. Over residues 272 to 281 (GPRGGQGPKG) the composition is skewed to gly residues. The tract at residues 308 to 336 (GGGIILVPVNDQNPTRSPVSGSVFYRGQA) is telopeptide. The propeptide at 337-547 (EETDVNLGSV…GFEMGPACFY (211 aa)) is C-terminal propeptide. A Fibrillar collagen NC1 domain is found at 343 to 547 (LGSVADVIEL…GFEMGPACFY (205 aa)). N-linked (GlcNAc...) asparagine glycosylation is found at Asn381 and Asn406.

The protein belongs to the fibrillar collagen family.

It is found in the secreted. The protein resides in the extracellular space. The protein localises to the extracellular matrix. This chain is Collagen EMF1-alpha (COLF1), found in Ephydatia muelleri (Mueller's freshwater sponge).